The primary structure comprises 807 residues: Centrosomal protein of 97 kDa (807 aa).

LRR repeat units follow at residues 34–55 (DTQT…EKCR), 56–77 (NLVQ…AKLI), 78–99 (HLRV…KDLV), 100–121 (HLEW…NSST), 122–143 (SLQH…SKLK), 144–165 (SLKT…SACL), and 168–189 (SLTI…AFLA). Positions 208–246 (TPSIPGFDYRPFIVSWCLNLKVLDGYVVSQKESLKAEWL) constitute an LRRCT domain. The tract at residues 306 to 330 (RSDGYLTSSTPNKRLPLSTEHHSPT) is disordered. Residues 519-548 (ISKAATKLQSCWRGFYARKYNPKVKDVCYE) form the IQ domain. Residues 607 to 623 (TANSSENDLPSASNSKH) are compositionally biased toward polar residues. Positions 607–756 (TANSSENDLP…RPEITTCSDN (150 aa)) are disordered. The span at 681–690 (TGRHYNDKVP) shows a compositional bias: basic and acidic residues. The segment covering 704 to 724 (SQSSKDSFTSEQDSSLLQQYL) has biased composition (polar residues).

Its subcellular location is the cytoplasm. It is found in the cytoskeleton. The protein localises to the microtubule organizing center. The protein resides in the centrosome. Its function is as follows. Acts as a key negative regulator of ciliogenesis in collaboration with ccp110 by capping the mother centriole thereby preventing cilia formation. Required for recruitment of ccp110 to the centrosome. The polypeptide is Centrosomal protein of 97 kDa (cep97) (Xenopus laevis (African clawed frog)).